The following is a 152-amino-acid chain: Protein Smg homolog (152 aa).

Belongs to the Smg family.

The protein is Protein Smg homolog of Bordetella avium (strain 197N).